We begin with the raw amino-acid sequence, 421 residues long: Signal recognition particle receptor FtsY (421 aa).

Basic residues predominate over residues methionine 1 to lysine 10. Positions methionine 1–glutamine 22 are disordered. Residues glycine 228 to threonine 235, aspartate 309 to arginine 313, and threonine 373 to aspartate 376 each bind GTP.

It belongs to the GTP-binding SRP family. FtsY subfamily. Part of the signal recognition particle protein translocation system, which is composed of SRP and FtsY. SRP is a ribonucleoprotein composed of Ffh and a 4.5S RNA molecule.

The protein resides in the cell membrane. Its subcellular location is the cytoplasm. The catalysed reaction is GTP + H2O = GDP + phosphate + H(+). Functionally, involved in targeting and insertion of nascent membrane proteins into the cytoplasmic membrane. Acts as a receptor for the complex formed by the signal recognition particle (SRP) and the ribosome-nascent chain (RNC). Interaction with SRP-RNC leads to the transfer of the RNC complex to the Sec translocase for insertion into the membrane, the hydrolysis of GTP by both Ffh and FtsY, and the dissociation of the SRP-FtsY complex into the individual components. This is Signal recognition particle receptor FtsY from Neisseria meningitidis serogroup C.